The chain runs to 318 residues: CRISPR-associated endonuclease Cas1 1 (318 aa).

Residues glutamate 157, histidine 222, and glutamate 237 each coordinate Mn(2+).

Belongs to the CRISPR-associated endonuclease Cas1 family. As to quaternary structure, homodimer, forms a heterotetramer with a Cas2 homodimer. The cofactor is Mg(2+). Mn(2+) serves as cofactor.

In terms of biological role, CRISPR (clustered regularly interspaced short palindromic repeat), is an adaptive immune system that provides protection against mobile genetic elements (viruses, transposable elements and conjugative plasmids). CRISPR clusters contain spacers, sequences complementary to antecedent mobile elements, and target invading nucleic acids. CRISPR clusters are transcribed and processed into CRISPR RNA (crRNA). Acts as a dsDNA endonuclease. Involved in the integration of spacer DNA into the CRISPR cassette. The chain is CRISPR-associated endonuclease Cas1 1 from Francisella tularensis subsp. novicida (strain U112).